Consider the following 193-residue polypeptide: MQSKLILASTSPFRKEILSKIQLDFDAISPVCDETPLKNESPINLVTRLAETKANSCGIEDPNYLIIGSDQVCVINEKIVGKPLTREKAVQQLEEASGHKITFYTGLSVFNTTTKQADTICEEFNVYFRQLTRKQIENYVDKEEPFYCAGSFKCEGLGIALFEKLEGKDPNTLIGLPLISLIDMLEKQGLNVL.

The active-site Proton acceptor is the Asp70.

Belongs to the Maf family. YceF subfamily. It depends on a divalent metal cation as a cofactor.

Its subcellular location is the cytoplasm. It carries out the reaction N(7)-methyl-GTP + H2O = N(7)-methyl-GMP + diphosphate + H(+). Functionally, nucleoside triphosphate pyrophosphatase that hydrolyzes 7-methyl-GTP (m(7)GTP). May have a dual role in cell division arrest and in preventing the incorporation of modified nucleotides into cellular nucleic acids. The sequence is that of 7-methyl-GTP pyrophosphatase from Aliivibrio fischeri (strain ATCC 700601 / ES114) (Vibrio fischeri).